The sequence spans 401 residues: Bifunctional enzyme IspD/IspF (401 aa).

Positions 1–234 (MQKPPRTAAI…SRLTAALGDI (234 aa)) are 2-C-methyl-D-erythritol 4-phosphate cytidylyltransferase. Positions 235–401 (RTGTGYDVHA…SPWGAEGQAS (167 aa)) are 2-C-methyl-D-erythritol 2,4-cyclodiphosphate synthase. D241 and H243 together coordinate a divalent metal cation. 4-CDP-2-C-methyl-D-erythritol 2-phosphate is bound by residues 241 to 243 (DVH) and 267 to 268 (HS). Residue H275 coordinates a divalent metal cation. 4-CDP-2-C-methyl-D-erythritol 2-phosphate is bound by residues 289–291 (DIG), 365–368 (TTSE), F372, and R375.

This sequence in the N-terminal section; belongs to the IspD/TarI cytidylyltransferase family. IspD subfamily. In the C-terminal section; belongs to the IspF family. Requires a divalent metal cation as cofactor.

It catalyses the reaction 2-C-methyl-D-erythritol 4-phosphate + CTP + H(+) = 4-CDP-2-C-methyl-D-erythritol + diphosphate. The enzyme catalyses 4-CDP-2-C-methyl-D-erythritol 2-phosphate = 2-C-methyl-D-erythritol 2,4-cyclic diphosphate + CMP. It functions in the pathway isoprenoid biosynthesis; isopentenyl diphosphate biosynthesis via DXP pathway; isopentenyl diphosphate from 1-deoxy-D-xylulose 5-phosphate: step 2/6. The protein operates within isoprenoid biosynthesis; isopentenyl diphosphate biosynthesis via DXP pathway; isopentenyl diphosphate from 1-deoxy-D-xylulose 5-phosphate: step 4/6. Bifunctional enzyme that catalyzes the formation of 4-diphosphocytidyl-2-C-methyl-D-erythritol from CTP and 2-C-methyl-D-erythritol 4-phosphate (MEP) (IspD), and catalyzes the conversion of 4-diphosphocytidyl-2-C-methyl-D-erythritol 2-phosphate (CDP-ME2P) to 2-C-methyl-D-erythritol 2,4-cyclodiphosphate (ME-CPP) with a corresponding release of cytidine 5-monophosphate (CMP) (IspF). The protein is Bifunctional enzyme IspD/IspF of Rhodopseudomonas palustris (strain HaA2).